The primary structure comprises 239 residues: Proteasome subunit beta type-6 (239 aa).

A2 bears the N-acetylalanine mark. A propeptide spans 2-34 (AATLVAARGTRPAPAWGPEAIAPDWENREVSTG) (removed in mature form). T35 acts as the Nucleophile in catalysis. T69 bears the Phosphothreonine mark.

The protein belongs to the peptidase T1B family. The 26S proteasome consists of a 20S proteasome core and two 19S regulatory subunits. The 20S proteasome core is a barrel-shaped complex made of 28 subunits that are arranged in four stacked rings. The two outer rings are each formed by seven alpha subunits, and the two inner rings are formed by seven beta subunits. The proteolytic activity is exerted by three beta-subunits PSMB5, PSMB6 and PSMB7.

The protein localises to the cytoplasm. It is found in the nucleus. It carries out the reaction Cleavage of peptide bonds with very broad specificity.. Functionally, component of the 20S core proteasome complex involved in the proteolytic degradation of most intracellular proteins. This complex plays numerous essential roles within the cell by associating with different regulatory particles. Associated with two 19S regulatory particles, forms the 26S proteasome and thus participates in the ATP-dependent degradation of ubiquitinated proteins. The 26S proteasome plays a key role in the maintenance of protein homeostasis by removing misfolded or damaged proteins that could impair cellular functions, and by removing proteins whose functions are no longer required. Associated with the PA200 or PA28, the 20S proteasome mediates ubiquitin-independent protein degradation. This type of proteolysis is required in several pathways including spermatogenesis (20S-PA200 complex) or generation of a subset of MHC class I-presented antigenic peptides (20S-PA28 complex). Within the 20S core complex, PSMB6 displays a peptidylglutamyl-hydrolyzing activity also termed postacidic or caspase-like activity, meaning that the peptides bond hydrolysis occurs directly after acidic residues. In Bos taurus (Bovine), this protein is Proteasome subunit beta type-6 (PSMB6).